Consider the following 382-residue polypeptide: MNLKEKTRALFAEIFGYPATHTIQAPGRVNLIGEHTDYNDGFVLPCAIDYQTVISCAPRDDRTVRVIAADYDNQADEFSLDAPIVTHDSQQWSNYVRGVVKHLQQRNNAFGGVDMVISGNVPQGAGLSSSASLEVAVGTVFQQLYHLPLDGAQIALNGQEAENQFVGCNCGIMDQLISALGKKDHALLIDCRTLGAKAVSMPKGVAVVIINSNFKRTLVGSEYNTRREQCETGARFFQQPALRDVSLEAFNAVASELDPVVAKRVRHVLSENARTVEAASALEKGDLQRMGQLMAESHASMRDDFEITVPQIDTLVDIVKATIGDQGGVRMTGGGFGGCVVALIPEDLVPAVQQAVAQQYEAKTGIKETFYVCKSSQGAGQC.

34-37 (EHTD) provides a ligand contact to substrate. 124–130 (GAGLSSS) contributes to the ATP binding site. Residues S130 and E162 each coordinate Mg(2+). D174 acts as the Proton acceptor in catalysis. Y223 contacts substrate.

This sequence belongs to the GHMP kinase family. GalK subfamily.

It is found in the cytoplasm. It catalyses the reaction alpha-D-galactose + ATP = alpha-D-galactose 1-phosphate + ADP + H(+). The protein operates within carbohydrate metabolism; galactose metabolism. Its function is as follows. Catalyzes the transfer of the gamma-phosphate of ATP to D-galactose to form alpha-D-galactose-1-phosphate (Gal-1-P). The polypeptide is Galactokinase (Salmonella paratyphi A (strain ATCC 9150 / SARB42)).